The following is a 339-amino-acid chain: GTPase Obg (339 aa).

An Obg domain is found at 1 to 159 (MKFVDEAFVR…RELKLELKLL (159 aa)). The tract at residues 127–147 (NTHFKSSTNRAPRRTTSGEEG) is disordered. The OBG-type G domain occupies 160–333 (ADVGLLGLPN…LCYDLMSFLE (174 aa)). GTP is bound by residues 166-173 (GLPNAGKS), 191-195 (FTTLY), 213-216 (DIPG), 283-286 (NKID), and 314-316 (SAI). Mg(2+) contacts are provided by S173 and T193.

This sequence belongs to the TRAFAC class OBG-HflX-like GTPase superfamily. OBG GTPase family. Monomer. The cofactor is Mg(2+).

The protein resides in the cytoplasm. An essential GTPase which binds GTP, GDP and possibly (p)ppGpp with moderate affinity, with high nucleotide exchange rates and a fairly low GTP hydrolysis rate. Plays a role in control of the cell cycle, stress response, ribosome biogenesis and in those bacteria that undergo differentiation, in morphogenesis control. The sequence is that of GTPase Obg from Coxiella burnetii (strain CbuK_Q154) (Coxiella burnetii (strain Q154)).